Reading from the N-terminus, the 120-residue chain is NAD(P)H-quinone oxidoreductase subunit 3, chloroplastic (120 aa).

A run of 3 helical transmembrane segments spans residues 10 to 30, 64 to 84, and 89 to 109; these read FWLF…ISKI, MFAL…PWAM, and LGIS…IGLI.

Belongs to the complex I subunit 3 family. In terms of assembly, NDH is composed of at least 16 different subunits, 5 of which are encoded in the nucleus.

The protein localises to the plastid. Its subcellular location is the chloroplast thylakoid membrane. The enzyme catalyses a plastoquinone + NADH + (n+1) H(+)(in) = a plastoquinol + NAD(+) + n H(+)(out). It catalyses the reaction a plastoquinone + NADPH + (n+1) H(+)(in) = a plastoquinol + NADP(+) + n H(+)(out). Its function is as follows. NDH shuttles electrons from NAD(P)H:plastoquinone, via FMN and iron-sulfur (Fe-S) centers, to quinones in the photosynthetic chain and possibly in a chloroplast respiratory chain. The immediate electron acceptor for the enzyme in this species is believed to be plastoquinone. Couples the redox reaction to proton translocation, and thus conserves the redox energy in a proton gradient. The chain is NAD(P)H-quinone oxidoreductase subunit 3, chloroplastic from Angiopteris evecta (Mule's foot fern).